Consider the following 457-residue polypeptide: UDP-glycosyltransferase 74C1 (457 aa).

UDP-alpha-D-glucose-binding positions include Thr281, 336-338 (VPQ), 353-361 (HCGWNSTLE), and 375-378 (WTDQ).

It belongs to the UDP-glycosyltransferase family.

The protein is UDP-glycosyltransferase 74C1 (UGT74C1) of Arabidopsis thaliana (Mouse-ear cress).